The chain runs to 426 residues: Serine--tRNA ligase (426 aa).

Residue 233-235 coordinates L-serine; the sequence is TAE. 264-266 is a binding site for ATP; sequence RSE. E287 contributes to the L-serine binding site. 351-354 contributes to the ATP binding site; it reads EISS. S387 serves as a coordination point for L-serine.

It belongs to the class-II aminoacyl-tRNA synthetase family. Type-1 seryl-tRNA synthetase subfamily. As to quaternary structure, homodimer. The tRNA molecule binds across the dimer.

The protein localises to the cytoplasm. It catalyses the reaction tRNA(Ser) + L-serine + ATP = L-seryl-tRNA(Ser) + AMP + diphosphate + H(+). The catalysed reaction is tRNA(Sec) + L-serine + ATP = L-seryl-tRNA(Sec) + AMP + diphosphate + H(+). It participates in aminoacyl-tRNA biosynthesis; selenocysteinyl-tRNA(Sec) biosynthesis; L-seryl-tRNA(Sec) from L-serine and tRNA(Sec): step 1/1. Its function is as follows. Catalyzes the attachment of serine to tRNA(Ser). Is also able to aminoacylate tRNA(Sec) with serine, to form the misacylated tRNA L-seryl-tRNA(Sec), which will be further converted into selenocysteinyl-tRNA(Sec). The sequence is that of Serine--tRNA ligase from Pseudomonas putida (strain W619).